The chain runs to 735 residues: Type-3 glutamine synthetase (735 aa).

The GS beta-grasp domain occupies 89-183; sequence THYCHWFLPL…IPTAFCSWTG (95 aa). In terms of domain architecture, GS catalytic spans 188 to 621; it reads QKTPLLRSME…SLYDLVSTLV (434 aa).

The protein belongs to the glutamine synthetase family. Type 3 subfamily. In terms of assembly, homohexamer.

The enzyme catalyses L-glutamate + NH4(+) + ATP = L-glutamine + ADP + phosphate + H(+). The chain is Type-3 glutamine synthetase (glnA3) from Dictyostelium discoideum (Social amoeba).